The primary structure comprises 299 residues: Protein PRY1 (299 aa).

Residues 1-19 (MKLSKLSILTSALATSALA) form the signal peptide. The disordered stretch occupies residues 103–157 (TDSTTTLTSSESTSQSLAQATTTSTPAAASTTSTPAATTTTSQAAATSSASSSDS). One can recognise an SCP domain in the interval 167-281 (LAEHNKKRAL…AWGDYVICSY (115 aa)).

The protein belongs to the CRISP family. O-glycosylated.

The protein resides in the secreted. Its function is as follows. Secreted protein required for efficient export of lipids such as acetylated sterols. Acts in detoxification of hydrophobic compounds. This chain is Protein PRY1, found in Saccharomyces cerevisiae (strain ATCC 204508 / S288c) (Baker's yeast).